The primary structure comprises 476 residues: Glycogen synthase (476 aa).

Position 15 (Lys-15) interacts with ADP-alpha-D-glucose.

It belongs to the glycosyltransferase 1 family. Bacterial/plant glycogen synthase subfamily.

The catalysed reaction is [(1-&gt;4)-alpha-D-glucosyl](n) + ADP-alpha-D-glucose = [(1-&gt;4)-alpha-D-glucosyl](n+1) + ADP + H(+). It participates in glycan biosynthesis; glycogen biosynthesis. Functionally, synthesizes alpha-1,4-glucan chains using ADP-glucose. This chain is Glycogen synthase, found in Marinomonas sp. (strain MWYL1).